Reading from the N-terminus, the 372-residue chain is Probable butyrate kinase (372 aa).

Belongs to the acetokinase family.

The protein localises to the cytoplasm. The enzyme catalyses butanoate + ATP = butanoyl phosphate + ADP. In Oleidesulfovibrio alaskensis (strain ATCC BAA-1058 / DSM 17464 / G20) (Desulfovibrio alaskensis), this protein is Probable butyrate kinase.